We begin with the raw amino-acid sequence, 467 residues long: uncharacterized protein (467 aa).

Lys290 carries the post-translational modification N6-(pyridoxal phosphate)lysine.

It belongs to the class-III pyridoxal-phosphate-dependent aminotransferase family. Pyridoxal 5'-phosphate is required as a cofactor.

This is an uncharacterized protein from Sinorhizobium fredii (strain NBRC 101917 / NGR234).